Consider the following 443-residue polypeptide: tRNA-2-methylthio-N(6)-dimethylallyladenosine synthase (443 aa).

The MTTase N-terminal domain maps to 12 to 126 (KTFRVKSFGC…LPEMVADAAA (115 aa)). Cys21, Cys57, Cys89, Cys162, Cys166, and Cys169 together coordinate [4Fe-4S] cluster. Residues 148-380 (RKSAPTAFLT…QAALNRDQLA (233 aa)) enclose the Radical SAM core domain. Positions 383–443 (KASVGKTCEV…GPNSISGRLA (61 aa)) constitute a TRAM domain.

It belongs to the methylthiotransferase family. MiaB subfamily. As to quaternary structure, monomer. Requires [4Fe-4S] cluster as cofactor.

Its subcellular location is the cytoplasm. The enzyme catalyses N(6)-dimethylallyladenosine(37) in tRNA + (sulfur carrier)-SH + AH2 + 2 S-adenosyl-L-methionine = 2-methylsulfanyl-N(6)-dimethylallyladenosine(37) in tRNA + (sulfur carrier)-H + 5'-deoxyadenosine + L-methionine + A + S-adenosyl-L-homocysteine + 2 H(+). In terms of biological role, catalyzes the methylthiolation of N6-(dimethylallyl)adenosine (i(6)A), leading to the formation of 2-methylthio-N6-(dimethylallyl)adenosine (ms(2)i(6)A) at position 37 in tRNAs that read codons beginning with uridine. In Novosphingobium aromaticivorans (strain ATCC 700278 / DSM 12444 / CCUG 56034 / CIP 105152 / NBRC 16084 / F199), this protein is tRNA-2-methylthio-N(6)-dimethylallyladenosine synthase.